The following is a 554-amino-acid chain: Laccase-8 (554 aa).

An N-terminal signal peptide occupies residues 1-21 (MASAAMLVPLVLVLCTAAASA). 2 Plastocyanin-like domains span residues 29–145 (KVGG…PRNG) and 156–309 (EEIP…YKGV). Cu cation is bound by residues histidine 79 and histidine 81. Residues asparagine 107 and asparagine 113 are each glycosylated (N-linked (GlcNAc...) asparagine). Cu cation contacts are provided by histidine 124 and histidine 126. N-linked (GlcNAc...) asparagine glycosylation is found at asparagine 271 and asparagine 369. The Plastocyanin-like 3 domain occupies 411–537 (DFPDFPPPMQ…AMVFEVLNGP (127 aa)). Cu cation contacts are provided by histidine 455, histidine 458, histidine 460, histidine 516, cysteine 517, histidine 518, and histidine 522.

It belongs to the multicopper oxidase family. The cofactor is Cu cation.

Its subcellular location is the secreted. The protein localises to the extracellular space. The protein resides in the apoplast. The enzyme catalyses 4 hydroquinone + O2 = 4 benzosemiquinone + 2 H2O. Functionally, lignin degradation and detoxification of lignin-derived products. The polypeptide is Laccase-8 (LAC8) (Oryza sativa subsp. japonica (Rice)).